The chain runs to 303 residues: Beta-carotene 3-hydroxylase 2, chloroplastic (303 aa).

The N-terminal 52 residues, 1-52, are a transit peptide targeting the chloroplast; sequence MAAGLSTIAVTLKPLNRSSFSANHPISTAVFPPSLRFNGFRRRKILTVCFVV. 2 consecutive transmembrane segments (helical) span residues 96-116 and 130-150; these read YLIAAVMSSFGITSMAIMAVY and VLEMFGTFALSVGAAVGMEFW. A Fatty acid hydroxylase domain is found at 143–270; the sequence is AAVGMEFWAR…KFKGVPYGLF (128 aa). Residues 155 to 160 carry the Histidine box-1 motif; sequence HRALWH. Positions 165-171 match the Histidine box-2 motif; sequence NMHESHH. The next 2 helical transmembrane spans lie at 180–200 and 206–226; these read LNDVFAITNAVPAIGLLYYGF and VPGLCFGAGLGITMFGMAYMF. The short motif at 228–233 is the Histidine box-3 element; the sequence is HDGLVH. Positions 254–258 match the Histidine box-4 motif; sequence HQLHH.

It belongs to the sterol desaturase family. Homodimer. Expressed in leaves, flowers, stems, roots and siliques.

It is found in the plastid. Its subcellular location is the chloroplast membrane. It carries out the reaction all-trans-beta-carotene + 4 reduced [2Fe-2S]-[ferredoxin] + 2 O2 + 4 H(+) = all-trans-zeaxanthin + 4 oxidized [2Fe-2S]-[ferredoxin] + 2 H2O. Nonheme diiron monooxygenase involved in the biosynthesis of xanthophylls. Specific for beta-ring hydroxylations of beta-carotene. Also has a low activity toward the beta- and epsilon-rings of alpha-carotene. No activity with acyclic carotenoids such as lycopene and neurosporene. Uses ferredoxin as an electron donor. This chain is Beta-carotene 3-hydroxylase 2, chloroplastic (BETA-OHASE 2), found in Arabidopsis thaliana (Mouse-ear cress).